The sequence spans 224 residues: MKKIEAIAFDMYGTLYDVHSVVDACEKQYPGKGKDISVLWRQKQLEYAWLRCLMGQYIKFEEATANALTYTCNQMKLDCDEGSAMRLTEEYLRLKPFPEVRGALRALRQRGMRLAILSNGSTETIHDVVHNSGVEGEFEHLISVDSARAYKPHPLAYELGEEAFGISRESILFVSSNPWDVSGAKAFGYQVCWINRYGFAFDELGQTPDFTVPVMDAIVHLIAV.

Catalysis depends on Asp10, which acts as the Nucleophile.

This sequence belongs to the HAD-like hydrolase superfamily. S-2-haloalkanoic acid dehalogenase family.

It carries out the reaction a haloacetate + H2O = a halide anion + glycolate + H(+). In Moraxella sp. (strain B), this protein is Haloacetate dehalogenase H-2 (dehH2).